The sequence spans 64 residues: Large ribosomal subunit protein bL32 (64 aa).

The interval 1 to 36 is disordered; sequence MAVQKSRVTPSRRGQRRSHDALSAKQLSTDPTTGEV.

Belongs to the bacterial ribosomal protein bL32 family.

The protein is Large ribosomal subunit protein bL32 of Stenotrophomonas maltophilia (strain K279a).